The sequence spans 398 residues: 2-amino-3-ketobutyrate coenzyme A ligase (398 aa).

A pyridoxal 5'-phosphate-binding site is contributed by 111–112 (CF). Position 136 (H136) interacts with substrate. Residues S185, 210 to 213 (DDSH), 241 to 244 (TLGK), and 274 to 275 (SN) contribute to the pyridoxal 5'-phosphate site. The residue at position 244 (K244) is an N6-(pyridoxal phosphate)lysine. Residue R368 participates in substrate binding.

It belongs to the class-II pyridoxal-phosphate-dependent aminotransferase family. Homodimer. The cofactor is pyridoxal 5'-phosphate.

The catalysed reaction is glycine + acetyl-CoA = (2S)-2-amino-3-oxobutanoate + CoA. The protein operates within amino-acid degradation; L-threonine degradation via oxydo-reductase pathway; glycine from L-threonine: step 2/2. Catalyzes the cleavage of 2-amino-3-ketobutyrate to glycine and acetyl-CoA. This chain is 2-amino-3-ketobutyrate coenzyme A ligase, found in Escherichia coli (strain K12).